Consider the following 655-residue polypeptide: Sphingomyelin phosphodiesterase 3 (655 aa).

Topologically, residues 1-10 (MVLYTTPFPN) are cytoplasmic. An intramembrane region (helical) is located at residues 11–31 (SCLSALHAVSWALIFPCYWLV). Residues 32–64 (DRLLASFIPTTYEKRQRADDPCCLQLFCTVLFT) lie on the Cytoplasmic side of the membrane. S-palmitoyl cysteine attachment occurs at residues cysteine 53, cysteine 54, and cysteine 59. The segment at residues 65-85 (PVYLALLVAALPFAFLGFIFW) is an intramembrane region (helical). The Cytoplasmic segment spans residues 86–655 (SPLQSARRPY…LMVSAGEEEA (570 aa)). Position 178 is a phosphoserine (serine 178). The segment at 209–318 (VEYKGDGGRH…SGGSGEPGAN (110 aa)) is disordered. Composition is skewed to basic and acidic residues over residues 211 to 221 (YKGDGGRHPSD) and 246 to 255 (GGEEGGRPQE). Serine 289 bears the Phosphoserine mark. Position 362 (glutamate 362) interacts with Mg(2+). 2 S-palmitoyl cysteine lipidation sites follow: cysteine 395 and cysteine 396. Histidine 639 functions as the Proton acceptor in the catalytic mechanism.

The protein belongs to the neutral sphingomyelinase family. Requires Mg(2+) as cofactor. Palmitoylated, palmitoylation-deficient proteins are targeted for lysosomal degradation. In terms of tissue distribution, predominantly expressed in brain (at protein level).

It is found in the golgi apparatus membrane. It localises to the cell membrane. The enzyme catalyses a sphingomyelin + H2O = phosphocholine + an N-acylsphing-4-enine + H(+). It carries out the reaction N-(15Z-tetracosenoyl)sphing-4-enine-1-phosphocholine + H2O = N-(15Z-tetracosenoyl)-sphing-4-enine + phosphocholine + H(+). The catalysed reaction is N-(tetracosanoyl)-sphing-4-enine-1-phosphocholine + H2O = N-tetracosanoyl-sphing-4-enine + phosphocholine + H(+). It catalyses the reaction N-(hexadecanoyl)-sphing-4-enine-1-phosphocholine + H2O = N-hexadecanoylsphing-4-enine + phosphocholine + H(+). The enzyme catalyses an N-(acyl)-sphingosylphosphocholine + H2O = an N-acyl-sphingoid base + phosphocholine + H(+). It carries out the reaction 1-hexadecanoyl-sn-glycero-3-phosphocholine + H2O = 1-hexadecanoyl-sn-glycerol + phosphocholine + H(+). The catalysed reaction is 1-O-octadecyl-sn-glycero-3-phosphocholine + H2O = 1-O-octadecyl-sn-glycerol + phosphocholine + H(+). It catalyses the reaction a sphingosylphosphocholine + H2O = a sphingoid base + phosphocholine + H(+). It participates in lipid metabolism; sphingolipid metabolism. With respect to regulation, inhibited by nSMase inhibitor GW4869. Binding of anionic phospholipids (APLs) such as phosphatidylserine (PS) and phosphatidic acid (PA) increases enzymatic activity. Catalyzes the hydrolysis of sphingomyelin to form ceramide and phosphocholine. Ceramide mediates numerous cellular functions, such as apoptosis and growth arrest, and is capable of regulating these 2 cellular events independently. Also hydrolyzes sphingosylphosphocholine. Regulates the cell cycle by acting as a growth suppressor in confluent cells. Probably acts as a regulator of postnatal development and participates in bone and dentin mineralization. Binds to anionic phospholipids (APLs) such as phosphatidylserine (PS) and phosphatidic acid (PA) that modulate enzymatic activity and subcellular location. May be involved in IL-1-beta-induced JNK activation in hepatocytes. May act as a mediator in transcriptional regulation of NOS2/iNOS via the NF-kappa-B activation under inflammatory conditions. This chain is Sphingomyelin phosphodiesterase 3, found in Mus musculus (Mouse).